Reading from the N-terminus, the 442-residue chain is D-serine dehydratase (442 aa).

N6-(pyridoxal phosphate)lysine is present on lysine 118.

This sequence belongs to the serine/threonine dehydratase family. DsdA subfamily. Monomer. It depends on pyridoxal 5'-phosphate as a cofactor.

It carries out the reaction D-serine = pyruvate + NH4(+). The sequence is that of D-serine dehydratase from Escherichia coli (strain 55989 / EAEC).